The following is a 126-amino-acid chain: uncharacterized protein (126 aa).

Residues 3–23 (NMIVLIIFAAFIIYMIASYVY) form a helical membrane-spanning segment. The region spanning 39–123 (GYRKAQLIDV…GFKKWGGKIK (85 aa)) is the Rhodanese domain.

The protein resides in the cell membrane. This is an uncharacterized protein from Bacillus subtilis (strain 168).